The sequence spans 292 residues: Calcium-binding protein CBP (292 aa).

The disordered stretch occupies residues M1–P80. Over residues Y12–G21 the composition is skewed to gly residues. Residues A22 to A40 are compositionally biased toward pro residues. 2 consecutive EF-hand domains span residues G121–S156 and Y187–S222. Ca(2+) contacts are provided by D134, D136, S138, M140, E145, D200, D202, S204, K206, and E211.

Potential calcium sensor. The chain is Calcium-binding protein CBP from Oryza sativa subsp. japonica (Rice).